The chain runs to 100 residues: Integration host factor subunit alpha (100 aa).

It belongs to the bacterial histone-like protein family. Heterodimer of an alpha and a beta chain.

In terms of biological role, this protein is one of the two subunits of integration host factor, a specific DNA-binding protein that functions in genetic recombination as well as in transcriptional and translational control. This is Integration host factor subunit alpha (ihfA) from Zymomonas mobilis subsp. mobilis (strain ATCC 31821 / ZM4 / CP4).